A 131-amino-acid chain; its full sequence is Cuticle protein 79, isoform A (131 aa).

3 consecutive repeat copies span residues 37–40, 45–48, and 53–56.

Its function is as follows. Component of the cuticle of migratory locust which contains more than 100 different structural proteins. The chain is Cuticle protein 79, isoform A from Locusta migratoria (Migratory locust).